A 1037-amino-acid polypeptide reads, in one-letter code: Probable aminoglycoside efflux pump (1037 aa).

Over 1–9 the chain is Cytoplasmic; that stretch reads MANFFIDRP. The chain crosses the membrane as a helical span at residues 10–28; sequence IFAWVLAILLCLTGTLAIF. Over 29–339 the chain is Periplasmic; sequence SLPVEQYPDL…TSFVKASIED (311 aa). Residues 340 to 359 form a helical membrane-spanning segment; it reads VVKTLLEAIALVFLVMYLFL. Topologically, residues 360–365 are cytoplasmic; the sequence is QNFRAT. The helical transmembrane segment at 366–385 threads the bilayer; it reads LIPTIAVPVVLMGTFSVLYA. Topologically, residues 386–391 are periplasmic; sequence FGYSVN. Residues 392–413 traverse the membrane as a helical segment; sequence TLTMFAMVLAIGLLVDDAIVVV. The Cytoplasmic portion of the chain corresponds to 414 to 441; that stretch reads ENVERIMSEEGLTPREATRKSMGQIQGA. Residues 442–460 traverse the membrane as a helical segment; the sequence is LVGIAMVLSAVFVPMAFFG. The Periplasmic segment spans residues 461 to 473; the sequence is GTTGAIYRQFSIT. A helical membrane pass occupies residues 474–496; sequence IVAAMVLSVLVAMILTPALCATL. At 497 to 537 the chain is on the cytoplasmic side; the sequence is LKPLKKGEHHGQKGFFAWFNQMFNRNAERYEKGVAKILHRS. A helical membrane pass occupies residues 538–556; it reads LRWIVIYVLLLGGMVFLFL. At 557–870 the chain is on the periplasmic side; that stretch reads RLPTSFLPLE…SYQERLSGAQ (314 aa). Residues 871–890 traverse the membrane as a helical segment; sequence APALYAISLLVVFLCLAALY. At 891 to 896 the chain is on the cytoplasmic side; that stretch reads ESWSVP. The helical transmembrane segment at 897 to 916 threads the bilayer; sequence FSVMLVVPLGVIGALLATWM. The Periplasmic portion of the chain corresponds to 917–922; it reads RGLEND. A helical transmembrane segment spans residues 923–944; that stretch reads VYFQVGLLTVIGLSAKNAILIV. Over 945–971 the chain is Cytoplasmic; sequence EFANEMNQKGHDLFEATLHACRQRLRP. Residues 972-990 traverse the membrane as a helical segment; it reads ILMTSLAFIFGVLPMATST. Residues 991-1003 are Periplasmic-facing; that stretch reads GAGSGGQHAVGTG. The helical transmembrane segment at 1004–1026 threads the bilayer; that stretch reads VMGGMISATILAIYFVPLFFVLV. Over 1027 to 1037 the chain is Cytoplasmic; sequence RRRFPLKPRPE.

It belongs to the resistance-nodulation-cell division (RND) (TC 2.A.6) family.

The protein localises to the cell inner membrane. In terms of biological role, participates in the efflux of aminoglycosides. Confers resistance to a variety of these substances. This Escherichia coli (strain K12) protein is Probable aminoglycoside efflux pump (acrD).